A 549-amino-acid polypeptide reads, in one-letter code: DDB1- and CUL4-associated factor 11 (549 aa).

Low complexity predominate over residues 1–24 (MGSRNSSSAGSGSLEPSEGLSRRG). A disordered region spans residues 1–40 (MGSRNSSSAGSGSLEPSEGLSRRGTGLRRSEEEEEEDEDV). A phosphoserine mark is found at Ser-73 and Ser-75. WD repeat units follow at residues 170–210 (TYSQ…HKFK), 216–258 (DVGW…TALD), 263–302 (ERRF…RTLQ), 305–345 (SHED…EDDP), 353–392 (GHQD…SREG), 435–480 (GVLH…KKLT), and 481–520 (NHKA…YFQD).

As to quaternary structure, interacts with DDB1 and CUL4A.

It functions in the pathway protein modification; protein ubiquitination. Functionally, may function as a substrate receptor for CUL4-DDB1 E3 ubiquitin-protein ligase complex. The chain is DDB1- and CUL4-associated factor 11 (Dcaf11) from Mus musculus (Mouse).